The sequence spans 100 residues: Urease subunit gamma (100 aa).

The protein belongs to the urease gamma subunit family. Heterotrimer of UreA (gamma), UreB (beta) and UreC (alpha) subunits. Three heterotrimers associate to form the active enzyme.

Its subcellular location is the cytoplasm. The enzyme catalyses urea + 2 H2O + H(+) = hydrogencarbonate + 2 NH4(+). It functions in the pathway nitrogen metabolism; urea degradation; CO(2) and NH(3) from urea (urease route): step 1/1. In Agrobacterium fabrum (strain C58 / ATCC 33970) (Agrobacterium tumefaciens (strain C58)), this protein is Urease subunit gamma.